The chain runs to 455 residues: MFS-type transporter SLC18B1 (455 aa).

Met-1 is subject to N-acetylmethionine. Residues 1-26 (MDTAGPPAPAGTEGDGPGGSTGETSR) are disordered. The Cytoplasmic segment spans residues 1–32 (MDTAGPPAPAGTEGDGPGGSTGETSRRLSKEQ). Residue Ser-20 is modified to Phosphoserine. The helical transmembrane segment at 33 to 53 (IFVLVSAASMNLGCMMTYSIL) threads the bilayer. The Extracellular portion of the chain corresponds to 54 to 69 (GPFFPKEAEKKGASNT). Residues 70-90 (TIGMIFGCYALFELLASLVFG) traverse the membrane as a helical segment. Topologically, residues 91–99 (KYLVHIGAK) are cytoplasmic. A helical transmembrane segment spans residues 100 to 120 (FMFIAGMFVSGGVTILFGVLD). At 121–126 (QLPEGP) the chain is on the extracellular side. Residues 127–147 (IFIAMCFLVRIVDAIGFGAAI) form a helical membrane-spanning segment. At 148–166 (TASSSILAKAFPNNVATVM) the chain is on the cytoplasmic side. Residues 167 to 187 (GSLEVFSGLGLVAGPPLGGLL) form a helical membrane-spanning segment. Residues 188-194 (YQSFGYE) lie on the Extracellular side of the membrane. Residues 195-215 (VPFIFLGCIVLLMIPLNLCIL) form a helical membrane-spanning segment. Residues 216–232 (PSYESDAGKQSFWKLVT) are Cytoplasmic-facing. A helical transmembrane segment spans residues 233-253 (LPKIGLIAFVIISLSSCFGFL). Residues 254 to 271 (DPTLSLFVMKKFSLSTGY) are Extracellular-facing. A helical transmembrane segment spans residues 272–292 (VGLVFLGLSLSYAISSPLFGL). The Cytoplasmic portion of the chain corresponds to 293-303 (LSDKMPNLRKW). Residues 304–324 (FLVFGNLITAGCYMLLGPIPL) traverse the membrane as a helical segment. The Extracellular portion of the chain corresponds to 325-330 (LHIKSQ). A helical transmembrane segment spans residues 331–351 (LWLLVLVLVINGVSAGMSIIP). Over 352–376 (TFPEMLSCAYANGFEDGISTLGLVS) the chain is Cytoplasmic. Residues 377–397 (GLFGAMWSVGAFMGPILGGFL) traverse the membrane as a helical segment. At 398-406 (CEKIGFEWA) the chain is on the extracellular side. Residues 407-427 (AAIQGLWTLLSGVAMALFYLW) traverse the membrane as a helical segment. Over 428-455 (EDSTMRRSKAQNILGTEEEQAALLPNDT) the chain is Cytoplasmic.

As to expression, expressed in brain structures, particularly in hippocampus, cortex, and cerebellum (at protein level). Expressed in astrocytes and hippocampal neurons (at protein level). Expressed in peritoneal mast cells.

It is found in the cytoplasmic vesicle. Its subcellular location is the secretory vesicle membrane. The protein resides in the secretory vesicle. The protein localises to the synaptic vesicle membrane. The enzyme catalyses spermine(in) + n H(+)(out) = spermine(out) + n H(+)(in). The catalysed reaction is spermidine(in) + n H(+)(out) = spermidine(out) + n H(+)(in). It catalyses the reaction serotonin(in) + n H(+)(out) = serotonin(out) + n H(+)(in). Functionally, proton-coupled polyamine antiporter involved in the translocation of polyamines from cytosol into secretory vesicles prior to their release via exocytosis. Uses the electrochemical proton gradient generated by a V-type proton-pumping ATPase to couple the efflux of protons with the uptake of a polyamine molecule. Facilitates vesicular storage of spermine and spermidine in astrocytes with an impact on glutamatergic neuronal transmission and memory formation. Upon antigen stimulation, regulates polyamine accumulation and release in mast cell secretory granules, which in turn potentiates mast cell degranulation and histamine secretion. This Rattus norvegicus (Rat) protein is MFS-type transporter SLC18B1.